The following is a 165-amino-acid chain: Peptide methionine sulfoxide reductase MsrA (165 aa).

Residue Cys10 is part of the active site.

Belongs to the MsrA Met sulfoxide reductase family.

It carries out the reaction L-methionyl-[protein] + [thioredoxin]-disulfide + H2O = L-methionyl-(S)-S-oxide-[protein] + [thioredoxin]-dithiol. It catalyses the reaction [thioredoxin]-disulfide + L-methionine + H2O = L-methionine (S)-S-oxide + [thioredoxin]-dithiol. Its function is as follows. Has an important function as a repair enzyme for proteins that have been inactivated by oxidation. Catalyzes the reversible oxidation-reduction of methionine sulfoxide in proteins to methionine. This Campylobacter jejuni subsp. jejuni serotype O:23/36 (strain 81-176) protein is Peptide methionine sulfoxide reductase MsrA.